The primary structure comprises 143 residues: Large ribosomal subunit protein uL15 (143 aa).

Basic residues-rich tracts occupy residues 1 to 13 and 23 to 38; these read MIRK…KMRG and KKHR…GNAG. The interval 1 to 38 is disordered; it reads MIRKSKKITKMRGSRTCGYGEAKKHRGAGHRGGRGNAG.

It belongs to the universal ribosomal protein uL15 family. In terms of assembly, part of the 50S ribosomal subunit.

Functionally, binds to the 23S rRNA. This is Large ribosomal subunit protein uL15 from Methanococcus maripaludis (strain C7 / ATCC BAA-1331).